Reading from the N-terminus, the 239-residue chain is Myogenic factor 6 (239 aa).

The interval Q27–E64 is disordered. The 52-residue stretch at D96 to L147 folds into the bHLH domain. The disordered stretch occupies residues D155 to K184.

Efficient DNA binding requires dimerization with another bHLH protein.

The protein resides in the nucleus. Functionally, involved in muscle differentiation (myogenic factor). Induces fibroblasts to differentiate into myoblasts. Probable sequence specific DNA-binding protein. This Tetraodon nigroviridis (Spotted green pufferfish) protein is Myogenic factor 6 (myf6).